A 257-amino-acid chain; its full sequence is uncharacterized protein (257 aa).

An N-terminal signal peptide occupies residues 1-22 (MIHSRKLRLWLYLVLLAVFIGA). Cysteine 23 carries the N-palmitoyl cysteine lipid modification. Cysteine 23 is lipidated: S-diacylglycerol cysteine.

This sequence belongs to the staphylococcal tandem lipoprotein family.

It is found in the cell membrane. This is an uncharacterized protein from Staphylococcus aureus (strain Mu50 / ATCC 700699).